The following is a 201-amino-acid chain: Recombination protein RecR (201 aa).

Residues 57-74 form a C4-type zinc finger; that stretch reads CRICGFITSKDDDPCVIC. The 97-residue stretch at 82–178 folds into the Toprim domain; sequence SKIFVVENSQ…KVTRLARGLS (97 aa).

This sequence belongs to the RecR family.

May play a role in DNA repair. It seems to be involved in an RecBC-independent recombinational process of DNA repair. It may act with RecF and RecO. In Oenococcus oeni (strain ATCC BAA-331 / PSU-1), this protein is Recombination protein RecR.